We begin with the raw amino-acid sequence, 370 residues long: UDP-N-acetylglucosamine--N-acetylmuramyl-(pentapeptide) pyrophosphoryl-undecaprenol N-acetylglucosamine transferase (370 aa).

Residues 15-17 (TGG), asparagine 129, arginine 170, serine 199, isoleucine 254, and glutamine 299 each bind UDP-N-acetyl-alpha-D-glucosamine.

The protein belongs to the glycosyltransferase 28 family. MurG subfamily.

Its subcellular location is the cell inner membrane. It carries out the reaction di-trans,octa-cis-undecaprenyl diphospho-N-acetyl-alpha-D-muramoyl-L-alanyl-D-glutamyl-meso-2,6-diaminopimeloyl-D-alanyl-D-alanine + UDP-N-acetyl-alpha-D-glucosamine = di-trans,octa-cis-undecaprenyl diphospho-[N-acetyl-alpha-D-glucosaminyl-(1-&gt;4)]-N-acetyl-alpha-D-muramoyl-L-alanyl-D-glutamyl-meso-2,6-diaminopimeloyl-D-alanyl-D-alanine + UDP + H(+). Its pathway is cell wall biogenesis; peptidoglycan biosynthesis. Its function is as follows. Cell wall formation. Catalyzes the transfer of a GlcNAc subunit on undecaprenyl-pyrophosphoryl-MurNAc-pentapeptide (lipid intermediate I) to form undecaprenyl-pyrophosphoryl-MurNAc-(pentapeptide)GlcNAc (lipid intermediate II). The chain is UDP-N-acetylglucosamine--N-acetylmuramyl-(pentapeptide) pyrophosphoryl-undecaprenol N-acetylglucosamine transferase from Magnetococcus marinus (strain ATCC BAA-1437 / JCM 17883 / MC-1).